The chain runs to 878 residues: Alanine--tRNA ligase (878 aa).

4 residues coordinate Zn(2+): H566, H570, C668, and H672.

This sequence belongs to the class-II aminoacyl-tRNA synthetase family. Zn(2+) is required as a cofactor.

Its subcellular location is the cytoplasm. It carries out the reaction tRNA(Ala) + L-alanine + ATP = L-alanyl-tRNA(Ala) + AMP + diphosphate. Its function is as follows. Catalyzes the attachment of alanine to tRNA(Ala) in a two-step reaction: alanine is first activated by ATP to form Ala-AMP and then transferred to the acceptor end of tRNA(Ala). Also edits incorrectly charged Ser-tRNA(Ala) and Gly-tRNA(Ala) via its editing domain. The protein is Alanine--tRNA ligase of Bacillus velezensis (strain DSM 23117 / BGSC 10A6 / LMG 26770 / FZB42) (Bacillus amyloliquefaciens subsp. plantarum).